Consider the following 101-residue polypeptide: Small ribosomal subunit protein bS18c (101 aa).

Belongs to the bacterial ribosomal protein bS18 family. Part of the 30S ribosomal subunit.

It is found in the plastid. The protein localises to the chloroplast. In Lepidium virginicum (Virginia pepperweed), this protein is Small ribosomal subunit protein bS18c.